A 299-amino-acid chain; its full sequence is Oxygen-dependent coproporphyrinogen-III oxidase (299 aa).

A substrate-binding site is contributed by Ser92. Residues His96 and His106 each contribute to the Mn(2+) site. Catalysis depends on His106, which acts as the Proton donor. A substrate-binding site is contributed by 108–110; sequence NVR. His145 and His175 together coordinate Mn(2+). Residues 240 to 275 are important for dimerization; that stretch reads YVEFNLVWDRGTLFGLQTGGRTESILMSMPPLVRWE. Residue 258–260 coordinates substrate; it reads GGR.

Belongs to the aerobic coproporphyrinogen-III oxidase family. As to quaternary structure, homodimer. The cofactor is Mn(2+).

The protein localises to the cytoplasm. The enzyme catalyses coproporphyrinogen III + O2 + 2 H(+) = protoporphyrinogen IX + 2 CO2 + 2 H2O. It participates in porphyrin-containing compound metabolism; protoporphyrin-IX biosynthesis; protoporphyrinogen-IX from coproporphyrinogen-III (O2 route): step 1/1. Functionally, involved in the heme biosynthesis. Catalyzes the aerobic oxidative decarboxylation of propionate groups of rings A and B of coproporphyrinogen-III to yield the vinyl groups in protoporphyrinogen-IX. The protein is Oxygen-dependent coproporphyrinogen-III oxidase of Escherichia fergusonii (strain ATCC 35469 / DSM 13698 / CCUG 18766 / IAM 14443 / JCM 21226 / LMG 7866 / NBRC 102419 / NCTC 12128 / CDC 0568-73).